A 444-amino-acid polypeptide reads, in one-letter code: Glucoside xylosyltransferase 2 (444 aa).

At 1–4 (MKLR) the chain is on the cytoplasmic side. The chain crosses the membrane as a helical; Signal-anchor for type II membrane protein span at residues 5 to 25 (SKAAALLLLALAVLLLALLSL). At 26–444 (RARRDPEPPG…IIHMGPNPMS (419 aa)) the chain is on the lumenal side. The disordered stretch occupies residues 31-101 (PEPPGFPARP…LARRPGETRS (71 aa)). Residues 68 to 83 (RSPRRQPPRLRPRAGR) show a composition bias toward basic residues. Residues 87–101 (ASREKLARRPGETRS) are compositionally biased toward basic and acidic residues. Asn-275 carries an N-linked (GlcNAc...) asparagine glycan.

The protein belongs to the glycosyltransferase 8 family.

The protein resides in the membrane. The enzyme catalyses 3-O-(beta-D-glucosyl)-L-seryl-[EGF-like domain protein] + UDP-alpha-D-xylose = 3-O-[alpha-D-xylosyl-(1-&gt;3)-beta-D-glucosyl]-L-seryl-[EGF-like domain protein] + UDP + H(+). In terms of biological role, glycosyltransferase which elongates the O-linked glucose attached to EGF-like repeats in the extracellular domain of Notch proteins by catalyzing the addition of xylose. The sequence is that of Glucoside xylosyltransferase 2 (Gxylt2) from Mus musculus (Mouse).